The sequence spans 388 residues: Leucine aminopeptidase 1 (388 aa).

Positions 1-19 (MRVLAAIALGATGLRGALA) are cleaved as a signal peptide. Positions 20–88 (AVVPQEVLGT…YPTLNSASYV (69 aa)) are excised as a propeptide. N-linked (GlcNAc...) asparagine glycans are attached at residues Asn-106 and Asn-180. Residues His-188 and Asp-207 each contribute to the Zn(2+) site. N-linked (GlcNAc...) asparagine glycosylation occurs at Asn-232. 2 residues coordinate Zn(2+): Glu-246 and Asp-273. Cys-322 and Cys-326 form a disulfide bridge. His-355 contributes to the Zn(2+) binding site.

It belongs to the peptidase M28 family. M28E subfamily. In terms of assembly, monomer. Requires Zn(2+) as cofactor.

The protein resides in the secreted. Functionally, extracellular aminopeptidase that allows assimilation of proteinaceous substrates. The chain is Leucine aminopeptidase 1 (lap1) from Aspergillus clavatus (strain ATCC 1007 / CBS 513.65 / DSM 816 / NCTC 3887 / NRRL 1 / QM 1276 / 107).